Reading from the N-terminus, the 263-residue chain is uncharacterized protein (263 aa).

Positions 1 to 22 (MGYLKRLVLYIVIMVMSVFIIG) are cleaved as a signal peptide. Residue C23 is the site of N-palmitoyl cysteine attachment. C23 carries S-diacylglycerol cysteine lipidation.

Belongs to the staphylococcal tandem lipoprotein family.

It localises to the cell membrane. This is an uncharacterized protein from Staphylococcus aureus (strain N315).